The primary structure comprises 433 residues: Inositol hexakisphosphate kinase 1 (433 aa).

The interval glutamate 100–serine 160 is disordered. The span at proline 113–histidine 123 shows a compositional bias: basic residues. A compositionally biased stretch (polar residues) spans serine 139 to alanine 149. Over residues lysine 150 to serine 160 the composition is skewed to basic and acidic residues. Serine 151 is subject to Phosphoserine. Proline 220–glycine 228 provides a ligand contact to substrate. The disordered stretch occupies residues glutamate 359 to proline 383.

This sequence belongs to the inositol phosphokinase (IPK) family. In terms of tissue distribution, highly expressed in brain and testis. Detected at much lower levels in heart, kidney, liver, lung and spleen.

It is found in the cytoplasm. It localises to the nucleus. The catalysed reaction is 1D-myo-inositol hexakisphosphate + ATP = 5-diphospho-1D-myo-inositol 1,2,3,4,6-pentakisphosphate + ADP. It carries out the reaction 1-diphospho-1D-myo-inositol 2,3,4,5,6-pentakisphosphate + ATP + H(+) = 1,5-bis(diphospho)-1D-myo-inositol 2,3,4,6-tetrakisphosphate + ADP. In terms of biological role, converts inositol hexakisphosphate (InsP6) to diphosphoinositol pentakisphosphate (InsP7/PP-InsP5). Converts 1,3,4,5,6-pentakisphosphate (InsP5) to PP-InsP4. The protein is Inositol hexakisphosphate kinase 1 (Ip6k1) of Mus musculus (Mouse).